The chain runs to 841 residues: Probable alpha-glucuronidase A (841 aa).

The signal sequence occupies residues 1–20; the sequence is MRGLNLFQLILALLLSMVAA. Asn-51, Asn-76, Asn-85, Asn-149, Asn-222, Asn-279, Asn-310, Asn-343, Asn-450, Asn-465, Asn-527, Asn-576, Asn-682, Asn-723, and Asn-732 each carry an N-linked (GlcNAc...) asparagine glycan.

It belongs to the glycosyl hydrolase 67 family.

The protein localises to the secreted. The catalysed reaction is an alpha-D-glucuronoside + H2O = D-glucuronate + an alcohol. Alpha-glucuronidase involved in the hydrolysis of xylan, a major structural heterogeneous polysaccharide found in plant biomass representing the second most abundant polysaccharide in the biosphere, after cellulose. Releases 4-O-methylglucuronic acid from xylan. The chain is Probable alpha-glucuronidase A (aguA) from Aspergillus niger.